The chain runs to 104 residues: U-scoloptoxin(10)-Cw1a (104 aa).

An N-terminal signal peptide occupies residues 1–23 (MNKTVAVFFAVICVICVIKSCKT).

Belongs to the scoloptoxin-10 family. Post-translationally, contains 3 disulfide bonds. In terms of tissue distribution, expressed by the venom gland.

The protein localises to the secreted. The chain is U-scoloptoxin(10)-Cw1a from Cormocephalus westwoodi (Westwood's green centipede).